We begin with the raw amino-acid sequence, 367 residues long: Methylated-thiol--coenzyme M methyltransferase (367 aa).

Zn(2+)-binding residues include histidine 236, cysteine 238, and cysteine 313.

This sequence belongs to the uroporphyrinogen decarboxylase family. Homodimer. Zn(2+) is required as a cofactor.

The enzyme catalyses methanethiol + coenzyme M = methyl-coenzyme M + hydrogen sulfide + H(+). Functionally, methyltransferase involved in methanogenesis from methylated-thiols. Catalyzes two successive steps: mediates the transfer of a methyl group from the substrate to the cobalt cofactor of a methylated-thiol-specific corrinoid protein (MtsB), and the subsequent transfer of the methyl group from the corrinoid protein to coenzyme M. This is Methylated-thiol--coenzyme M methyltransferase (mtsA) from Methanosarcina mazei (strain ATCC BAA-159 / DSM 3647 / Goe1 / Go1 / JCM 11833 / OCM 88) (Methanosarcina frisia).